The chain runs to 382 residues: Sphingoid long-chain base transporter RSB1 (382 aa).

Residues 1–34 (MSNATNNTLGSLLPQLEAAANSNSLYGGMVPNLR) lie on the Extracellular side of the membrane. 2 N-linked (GlcNAc...) asparagine glycosylation sites follow: Asn3 and Asn6. A helical transmembrane segment spans residues 35 to 55 (FNITMIVIWGILLTIHVVQLL). The Cytoplasmic portion of the chain corresponds to 56 to 57 (MR). A helical transmembrane segment spans residues 58 to 78 (QYWFSIAFICTGILEVLGFIG). Residues 79 to 90 (RTWSHSNVADMD) are Extracellular-facing. The helical transmembrane segment at 91-111 (AFLLNMICLTIAPVFTMGGIY) threads the bilayer. At 112–135 (YQLAKLIEVYGHRFSLLPSPMAYS) the chain is on the cytoplasmic side. A helical transmembrane segment spans residues 136–156 (FIFICSDIVSLVVQAVGGGLC). Over 157–171 (GVAVTDGTSTTTGNH) the chain is Extracellular. Residues 172 to 192 (VFIAGLAIQVASMAIFLMLWF) form a helical membrane-spanning segment. The Cytoplasmic segment spans residues 193 to 241 (HFLFRIYISVRWEHINSRPISLSLLKISQTEVDYLYREKFHFLRLEPKR). A helical membrane pass occupies residues 242–262 (WVFHYFNLAITVAVLTIFTRC). The Extracellular portion of the chain corresponds to 263-281 (CYRLAELVVGWDGYLITHE). Residues 282–302 (WYFIILDALMMAIATVTLTIF) form a helical membrane-spanning segment. Over 303 to 382 (HPGFAFKGKS…LFSSKKKAKL (80 aa)) the chain is Cytoplasmic.

This sequence belongs to the lipid-translocating exporter (LTE) (TC 9.A.26.1) family.

The protein localises to the cell membrane. Functionally, catalyzes the ATP-dependent translocation of sphingoid long-chain bases (LCBs) from the cytoplasmic site toward the extracytoplasmic side of the membrane (flip-flop). Involved in the establishment of the functional lipid asymmetry of the plasma membrane. Regulates intracellular levels of LCBs, sphingolipid precursors that are growth inhibitory at increased levels. The polypeptide is Sphingoid long-chain base transporter RSB1 (RSB1) (Saccharomyces cerevisiae (strain JAY291) (Baker's yeast)).